Consider the following 679-residue polypeptide: UvrABC system protein C (679 aa).

Positions 65–143 (NSPGVYRMLN…IKRLRPRFNV (79 aa)) constitute a GIY-YIG domain. One can recognise a UVR domain in the interval 253–288 (QKVKSHMAEAMNQAAEDLDFERAAIYRDRLAALSHV).

It belongs to the UvrC family. As to quaternary structure, interacts with UvrB in an incision complex.

The protein localises to the cytoplasm. In terms of biological role, the UvrABC repair system catalyzes the recognition and processing of DNA lesions. UvrC both incises the 5' and 3' sides of the lesion. The N-terminal half is responsible for the 3' incision and the C-terminal half is responsible for the 5' incision. This Rhizobium etli (strain ATCC 51251 / DSM 11541 / JCM 21823 / NBRC 15573 / CFN 42) protein is UvrABC system protein C.